Here is a 226-residue protein sequence, read N- to C-terminus: UPF0758 protein Daro_3142 (226 aa).

The 124-residue stretch at serine 103–leucine 226 folds into the MPN domain. Residues histidine 174, histidine 176, and aspartate 187 each contribute to the Zn(2+) site. Residues histidine 174–aspartate 187 carry the JAMM motif motif.

It belongs to the UPF0758 family.

The sequence is that of UPF0758 protein Daro_3142 from Dechloromonas aromatica (strain RCB).